Reading from the N-terminus, the 115-residue chain is Large ribosomal subunit protein mL60 (115 aa).

The N-terminal 23 residues, 1–23, are a transit peptide targeting the mitochondrion; sequence MLGAFNSTLARFGGLVHKVPWRL. The disordered stretch occupies residues 88–115; it reads AGLQGFRKGVHKSPKWTRSTNRVNPTGF. Over residues 103-115 the composition is skewed to polar residues; that stretch reads WTRSTNRVNPTGF.

It belongs to the mitochondrion-specific ribosomal protein mL60 family. As to quaternary structure, component of the mitochondrial large ribosomal subunit (mt-LSU). Mature yeast 74S mitochondrial ribosomes consist of a small (37S) and a large (54S) subunit. The 37S small subunit contains a 15S ribosomal RNA (15S mt-rRNA) and at least 32 different proteins. The 54S large subunit contains a 21S rRNA (21S mt-rRNA) and at least 45 different proteins.

The protein localises to the mitochondrion. In terms of biological role, component of the mitochondrial ribosome (mitoribosome), a dedicated translation machinery responsible for the synthesis of mitochondrial genome-encoded proteins, including at least some of the essential transmembrane subunits of the mitochondrial respiratory chain. The mitoribosomes are attached to the mitochondrial inner membrane and translation products are cotranslationally integrated into the membrane. In Schizosaccharomyces pombe (strain 972 / ATCC 24843) (Fission yeast), this protein is Large ribosomal subunit protein mL60 (mrpl31).